The sequence spans 257 residues: Indole-3-glycerol phosphate synthase (257 aa).

It belongs to the TrpC family.

The enzyme catalyses 1-(2-carboxyphenylamino)-1-deoxy-D-ribulose 5-phosphate + H(+) = (1S,2R)-1-C-(indol-3-yl)glycerol 3-phosphate + CO2 + H2O. It functions in the pathway amino-acid biosynthesis; L-tryptophan biosynthesis; L-tryptophan from chorismate: step 4/5. This is Indole-3-glycerol phosphate synthase from Chlorobium chlorochromatii (strain CaD3).